Consider the following 686-residue polypeptide: ATP-dependent zinc metalloprotease FtsH 1 (686 aa).

The Cytoplasmic segment spans residues 1 to 33 (MCFCIVSSPEAMHSNADSPSSGPGLQPVWTTLR). Residues 34–54 (SPYVFWIGGAILLALLVHLGI) traverse the membrane as a helical segment. The Periplasmic segment spans residues 55-164 (KWQQASAPVR…TFAATQESDW (110 aa)). Residues 165 to 185 (VGTLLLWGLPLGLIVGIWLFF) traverse the membrane as a helical segment. The Cytoplasmic portion of the chain corresponds to 186–686 (MRRMATGGRE…AEGASPSSQG (501 aa)). Residue 257–264 (GPPGTGKT) participates in ATP binding. A Zn(2+)-binding site is contributed by histidine 479. Glutamate 480 is a catalytic residue. Positions 483 and 555 each coordinate Zn(2+). The tract at residues 661–686 (YAWLKEGDGTSRNSASAEGASPSSQG) is disordered. Positions 670–686 (TSRNSASAEGASPSSQG) are enriched in polar residues.

It in the central section; belongs to the AAA ATPase family. This sequence in the C-terminal section; belongs to the peptidase M41 family. In terms of assembly, homohexamer. The cofactor is Zn(2+).

Its subcellular location is the cell inner membrane. Acts as a processive, ATP-dependent zinc metallopeptidase for both cytoplasmic and membrane proteins. Plays a role in the quality control of integral membrane proteins. In Salinibacter ruber (strain M8), this protein is ATP-dependent zinc metalloprotease FtsH 1.